The chain runs to 329 residues: MECGGALQLPPGFRFHPTDDELVMYYLCRKCGGLPLAAPVIAEVDLYKFNPWDLPERAMGGEKEWYFFSPRDRKYPNGQRPNRAAGTGYWKATGADKPVGSPRAVAIKKALVFYAGKPPKGVKTNWIMHEYRLADVDRSAAARKLSKSSHNALRLDDWVLCRIYNKKGVIERYDTVDAGEDVKPAAAAAAAKGGRIGGGGGAAAMKVELSDYGFYDQEPESEMLCFDRSGSADRDSMPRLHTDSSGSEHVLSPSPSPDDFPGGGDHDYAESQPSGGCGGWPGVDWAAVGDDGFVIDSSLFELPSPAAFSRAAGDGAAFGDMFTYLQKPF.

The 158-residue stretch at 9 to 166 folds into the NAC domain; sequence LPPGFRFHPT…DWVLCRIYNK (158 aa). The disordered stretch occupies residues 228–281; the sequence is RSGSADRDSMPRLHTDSSGSEHVLSPSPSPDDFPGGGDHDYAESQPSGGCGGWP. Residues 230-242 are compositionally biased toward basic and acidic residues; the sequence is GSADRDSMPRLHT.

As to quaternary structure, interacts with NAC048 and NAC002. In terms of tissue distribution, expressed in roots and embryo. Weakly expressed in callus.

The protein localises to the nucleus. Its function is as follows. Transcription activator that binds to the promoter of the stress response gene LEA19. Involved in tolerance to abiotic stresses. This Oryza sativa subsp. japonica (Rice) protein is NAC domain-containing protein 71.